The chain runs to 381 residues: N-acetyldiaminopimelate deacetylase (381 aa).

Aspartate 71 is a catalytic residue. Glutamate 130 serves as the catalytic Proton acceptor.

It belongs to the peptidase M20A family. N-acetyldiaminopimelate deacetylase subfamily.

It catalyses the reaction N-acetyl-(2S,6S)-2,6-diaminopimelate + H2O = (2S,6S)-2,6-diaminopimelate + acetate. The protein operates within amino-acid biosynthesis; L-lysine biosynthesis via DAP pathway; LL-2,6-diaminopimelate from (S)-tetrahydrodipicolinate (acetylase route): step 3/3. Its function is as follows. Catalyzes the conversion of N-acetyl-diaminopimelate to diaminopimelate and acetate. In Ligilactobacillus salivarius (strain UCC118) (Lactobacillus salivarius), this protein is N-acetyldiaminopimelate deacetylase.